Reading from the N-terminus, the 465-residue chain is GTPase Der (465 aa).

2 consecutive EngA-type G domains span residues 3-167 (PLVA…PERS) and 179-352 (IHIA…VSAL). GTP contacts are provided by residues 9–16 (GRPNVGKS), 57–61 (DTGGM), 119–122 (NKID), 185–192 (GRPNVGKS), 232–236 (DTAGL), and 297–300 (NKWD). In terms of domain architecture, KH-like spans 353 to 437 (RQFSTSEVNK…PVRFLFREGD (85 aa)).

Belongs to the TRAFAC class TrmE-Era-EngA-EngB-Septin-like GTPase superfamily. EngA (Der) GTPase family. In terms of assembly, associates with the 50S ribosomal subunit.

Functionally, GTPase that plays an essential role in the late steps of ribosome biogenesis. This chain is GTPase Der, found in Xylella fastidiosa (strain M12).